We begin with the raw amino-acid sequence, 580 residues long: Glutamine--tRNA ligase (580 aa).

The 'HIGH' region motif lies at 41–51 (PEPNGYLHIGH). Residues 42–44 (EPN) and 48–54 (HIGHAKA) contribute to the ATP site. Residues Asp-74 and Tyr-218 each contribute to the L-glutamine site. Residues Thr-237, 285–286 (RL), and 293–295 (MSK) contribute to the ATP site. Positions 292-296 (VMSKR) match the 'KMSKS' region motif.

This sequence belongs to the class-I aminoacyl-tRNA synthetase family. In terms of assembly, monomer.

It localises to the cytoplasm. It catalyses the reaction tRNA(Gln) + L-glutamine + ATP = L-glutaminyl-tRNA(Gln) + AMP + diphosphate. The polypeptide is Glutamine--tRNA ligase (Xylella fastidiosa (strain Temecula1 / ATCC 700964)).